The chain runs to 360 residues: DNA replication and repair protein RecF (360 aa).

30-37 serves as a coordination point for ATP; that stretch reads GHNGSGKT.

It belongs to the RecF family.

It localises to the cytoplasm. The RecF protein is involved in DNA metabolism; it is required for DNA replication and normal SOS inducibility. RecF binds preferentially to single-stranded, linear DNA. It also seems to bind ATP. This chain is DNA replication and repair protein RecF, found in Actinobacillus pleuropneumoniae serotype 5b (strain L20).